Consider the following 288-residue polypeptide: Beta-lactamase CARB-4 (288 aa).

The first 17 residues, 1-17 (MKLLLVFSLLIPSMVFA), serve as a signal peptide directing secretion. The active-site Acyl-ester intermediate is Ser-65. Cys-72 and Cys-118 form a disulfide bridge. Position 229–231 (229–231 (RSG)) interacts with substrate.

It belongs to the class-A beta-lactamase family.

It catalyses the reaction a beta-lactam + H2O = a substituted beta-amino acid. Inhibited by clavulanic acid and sulbactam. Hydrolyzes carbenicillin. Methicillin and oxacillin are weakly hydrolyzed. This chain is Beta-lactamase CARB-4 (carB4), found in Pseudomonas aeruginosa.